Reading from the N-terminus, the 244-residue chain is Transforming protein v-Fos/v-Fox (244 aa).

The segment at 1-236 is transforming protein v-Fos; sequence DSLSYYHSPA…LFPASSGHSG (236 aa). The bZIP domain maps to 113-176; that stretch reads EVKRRIRRER…EKLEFILAAH (64 aa). Residues 115 to 135 form a basic motif region; the sequence is KRRIRRERNKMAAAKCRNRRR. The tract at residues 141-169 is leucine-zipper; it reads LQAETDQLEDEKSALQTEIANLLKEKEKL. The transforming protein v-Fox stretch occupies residues 237–244; that stretch reads FISMAGWQ.

Belongs to the bZIP family. Fos subfamily.

It localises to the host nucleus. The chain is Transforming protein v-Fos/v-Fox (FOS-FOX) from Mus musculus (Mouse).